Reading from the N-terminus, the 327-residue chain is AA9 family lytic polysaccharide monooxygenase B (327 aa).

Residues 1 to 19 (MKSFTATALAALLAQQAAA) form the signal peptide. Residues histidine 20 and histidine 98 each coordinate Cu(2+). Cysteines 68 and 192 form a disulfide. The O2 site is built by histidine 178 and glutamine 187. Position 189 (tyrosine 189) interacts with Cu(2+). The span at 264–280 (SPTTSLTPPVSTSTPAP) shows a compositional bias: low complexity. Residues 264-284 (SPTTSLTPPVSTSTPAPGNGG) form a disordered region. The region spanning 291 to 327 (CTVQKYGQCGGQGYTGCTTCAAGSTCNTTNQWYHQCV) is the CBM1 domain. Asparagine 317 carries N-linked (GlcNAc...) asparagine glycosylation.

The protein belongs to the polysaccharide monooxygenase AA9 family. It depends on Cu(2+) as a cofactor.

It localises to the secreted. It carries out the reaction [(1-&gt;4)-beta-D-glucosyl]n+m + reduced acceptor + O2 = 4-dehydro-beta-D-glucosyl-[(1-&gt;4)-beta-D-glucosyl]n-1 + [(1-&gt;4)-beta-D-glucosyl]m + acceptor + H2O.. Functionally, lytic polysaccharide monooxygenase (LPMO) that depolymerizes crystalline and amorphous polysaccharides via the oxidation of scissile alpha- or beta-(1-4)-glycosidic bonds, yielding C1 or C4 oxidation products. Catalysis by LPMOs requires the reduction of the active-site copper from Cu(II) to Cu(I) by a reducing agent and H(2)O(2) or O(2) as a cosubstrate. The chain is AA9 family lytic polysaccharide monooxygenase B (LPMO9B) from Podospora anserina (strain S / ATCC MYA-4624 / DSM 980 / FGSC 10383) (Pleurage anserina).